We begin with the raw amino-acid sequence, 143 residues long: Nucleoside diphosphate kinase (143 aa).

K11, F59, R87, T93, R104, and N114 together coordinate ATP. H117 functions as the Pros-phosphohistidine intermediate in the catalytic mechanism.

Belongs to the NDK family. As to quaternary structure, homotetramer. It depends on Mg(2+) as a cofactor.

The protein localises to the cytoplasm. The catalysed reaction is a 2'-deoxyribonucleoside 5'-diphosphate + ATP = a 2'-deoxyribonucleoside 5'-triphosphate + ADP. It carries out the reaction a ribonucleoside 5'-diphosphate + ATP = a ribonucleoside 5'-triphosphate + ADP. Its function is as follows. Major role in the synthesis of nucleoside triphosphates other than ATP. The ATP gamma phosphate is transferred to the NDP beta phosphate via a ping-pong mechanism, using a phosphorylated active-site intermediate. In Escherichia coli O7:K1 (strain IAI39 / ExPEC), this protein is Nucleoside diphosphate kinase.